The chain runs to 444 residues: Glutamyl-tRNA reductase (444 aa).

Residues 49 to 52 (TCNR), S117, 122 to 124 (EPQ), and Q128 contribute to the substrate site. Catalysis depends on C50, which acts as the Nucleophile. 202–207 (GAGETI) provides a ligand contact to NADP(+).

The protein belongs to the glutamyl-tRNA reductase family. As to quaternary structure, homodimer.

The enzyme catalyses (S)-4-amino-5-oxopentanoate + tRNA(Glu) + NADP(+) = L-glutamyl-tRNA(Glu) + NADPH + H(+). The protein operates within porphyrin-containing compound metabolism; protoporphyrin-IX biosynthesis; 5-aminolevulinate from L-glutamyl-tRNA(Glu): step 1/2. Catalyzes the NADPH-dependent reduction of glutamyl-tRNA(Glu) to glutamate 1-semialdehyde (GSA). This Mannheimia succiniciproducens (strain KCTC 0769BP / MBEL55E) protein is Glutamyl-tRNA reductase.